Here is a 165-residue protein sequence, read N- to C-terminus: MTRKQKRLAIIGGGMSFIVAAVLLVMFAFGQSIAYFYMPADLEKTPVNPGTRIRLGGLVAEGSIKRGEGRTVSFTVTDGEAKVPVSYTGILPDLFREGQGVVTEGMFDAATHGFVADSVLAKHDENYMPKEVADRLKDKGLWQQGAEGAAPAASAASGDKTGATK.

Residues 1–7 (MTRKQKR) lie on the Cytoplasmic side of the membrane. The helical; Signal-anchor for type II membrane protein transmembrane segment at 8–28 (LAIIGGGMSFIVAAVLLVMFA) threads the bilayer. Residues 29–165 (FGQSIAYFYM…ASGDKTGATK (137 aa)) lie on the Periplasmic side of the membrane. Heme is bound by residues H123 and Y127. The disordered stretch occupies residues 138–165 (DKGLWQQGAEGAAPAASAASGDKTGATK). A compositionally biased stretch (low complexity) spans 145 to 158 (GAEGAAPAASAASG).

Belongs to the CcmE/CycJ family.

It is found in the cell inner membrane. Heme chaperone required for the biogenesis of c-type cytochromes. Transiently binds heme delivered by CcmC and transfers the heme to apo-cytochromes in a process facilitated by CcmF and CcmH. This is Cytochrome c-type biogenesis protein CcmE from Agrobacterium fabrum (strain C58 / ATCC 33970) (Agrobacterium tumefaciens (strain C58)).